Reading from the N-terminus, the 526-residue chain is Glucomannan 4-beta-mannosyltransferase 1 (526 aa).

Residues 31–51 (VIIPLLKLAVIVCSVMSIMLF) form a helical membrane-spanning segment. The active site involves aspartate 130. Substrate contacts are provided by aspartate 189 and aspartate 191. Aspartate 283 is a catalytic residue. Transmembrane regions (helical) follow at residues 362-382 (IVAH…CVIV), 399-419 (ITIL…LWIL), 477-497 (PLEI…LLFG), and 501-521 (FFVY…GLVG).

The protein belongs to the glycosyltransferase 2 family. Plant cellulose synthase-like A subfamily.

The protein resides in the golgi apparatus membrane. The catalysed reaction is GDP-mannose + (glucomannan)n = GDP + (glucomannan)n+1.. Functionally, possesses 4-beta-mannosyltransferase activity on mannan using GDP-mannose. The beta-1,4-mannan product is the backbone for galactomannan synthesis by galactomannan galactosyltransferase. The galactomannan is a hemicellulosic storage polysaccharide accumulated in the form of secondary wall thickenings in the seed endosperm. The chain is Glucomannan 4-beta-mannosyltransferase 1 from Cyamopsis tetragonoloba (Guar).